Here is a 117-residue protein sequence, read N- to C-terminus: Transcription elongation factor SPT4-B (117 aa).

Residues 1 to 40 are interaction with SUPT5H; it reads MALETVPKDLRHLRACLLCSLVKTIDQFEYDGCDNCDAYL. A C4-type zinc finger spans residues 16-36; the sequence is CLLCSLVKTIDQFEYDGCDNC.

Belongs to the SPT4 family. In terms of assembly, interacts with SUPT5H to form DSIF. DSIF interacts with the positive transcription elongation factor b complex (P-TEFb complex), which is composed of CDK9 and cyclin-T (CCNT1 or CCNT2). DSIF interacts with RNA polymerase II, and this interaction is reduced by phosphorylation of the C-terminal domain (CTD) of POLR2A by P-TEFb. DSIF also interacts with the NELF complex, which is composed of WHSC2/NELFA, COBRA1/NELFB, TH1L/NELFD and RDBP/NELFE, and this interaction occurs following prior binding of DSIF to RNA polymerase II. DSIF also interacts with HRMT1L2/PRMT1, HTATSF1/TATSF1, RNGTT/CAP1A, SKB1/PRMT5, SUPT6H, and can interact with PIN1. Ubiquitinated by Ubr5 when not assembled in the DSIF complex, leading to its degradation: Ubr5 recognizes and binds a degron that is not accessible when Supt4h1b is part of the DSIF complex. In terms of tissue distribution, expressed in brain, heart and liver.

It localises to the nucleus. Component of the DRB sensitivity-inducing factor complex (DSIF complex), which regulates mRNA processing and transcription elongation by RNA polymerase II. DSIF positively regulates mRNA capping by stimulating the mRNA guanylyltransferase activity of RNGTT/CAP1A. DSIF also acts cooperatively with the negative elongation factor complex (NELF complex) to enhance transcriptional pausing at sites proximal to the promoter. Transcriptional pausing may facilitate the assembly of an elongation competent RNA polymerase II complex. DSIF and NELF promote pausing by inhibition of the transcription elongation factor TFIIS/S-II. TFIIS/S-II binds to RNA polymerase II at transcription pause sites and stimulates the weak intrinsic nuclease activity of the enzyme. Cleavage of blocked transcripts by RNA polymerase II promotes the resumption of transcription from the new 3' terminus and may allow repeated attempts at transcription through natural pause sites. The polypeptide is Transcription elongation factor SPT4-B (Supt4h1b) (Mus musculus (Mouse)).